Here is a 129-residue protein sequence, read N- to C-terminus: Phosphoribosyl-AMP cyclohydrolase (129 aa).

Asp87 contributes to the Mg(2+) binding site. Residue Cys88 coordinates Zn(2+). Mg(2+)-binding residues include Asp89 and Asp91. Zn(2+)-binding residues include Cys104 and Cys111.

This sequence belongs to the PRA-CH family. In terms of assembly, homodimer. It depends on Mg(2+) as a cofactor. The cofactor is Zn(2+).

Its subcellular location is the cytoplasm. The enzyme catalyses 1-(5-phospho-beta-D-ribosyl)-5'-AMP + H2O = 1-(5-phospho-beta-D-ribosyl)-5-[(5-phospho-beta-D-ribosylamino)methylideneamino]imidazole-4-carboxamide. It functions in the pathway amino-acid biosynthesis; L-histidine biosynthesis; L-histidine from 5-phospho-alpha-D-ribose 1-diphosphate: step 3/9. In terms of biological role, catalyzes the hydrolysis of the adenine ring of phosphoribosyl-AMP. The sequence is that of Phosphoribosyl-AMP cyclohydrolase from Ruegeria sp. (strain TM1040) (Silicibacter sp.).